A 281-amino-acid polypeptide reads, in one-letter code: Glycerol uptake facilitator protein (281 aa).

Residues 1-5 are Cytoplasmic-facing; sequence MSQTS. The helical transmembrane segment at 6–34 threads the bilayer; the sequence is TLKGQCIAEFLGTGLLIFFGVGCVAALKV. Residues 35-39 lie on the Periplasmic side of the membrane; the sequence is AGASF. The chain crosses the membrane as a helical span at residues 40–60; sequence GQWEISVIWGLGVAMAIYLTA. Residues 61-63 lie on the Cytoplasmic side of the membrane; sequence GVS. Residues 64–67 lie within the membrane without spanning it; sequence GAHL. The NPA 1 motif lies at 68-70; sequence NPA. Residues 68–78 constitute an intramembrane region (helical); it reads NPAVTIALWLF. Residues 79–84 lie on the Cytoplasmic side of the membrane; the sequence is ACFDKR. The chain crosses the membrane as a helical span at residues 85–108; that stretch reads KVIPFIVSQVAGAFCAAALVYGLY. Residues 109-143 lie on the Periplasmic side of the membrane; it reads YNLFFDFEQTHHIVRGSVESVDLAGTFSTYPNPHI. A helical transmembrane segment spans residues 144-169; sequence NFVQAFAVEMVITAILMGLILALTDD. The Cytoplasmic portion of the chain corresponds to 170 to 177; it reads GNGVPRGP. A helical membrane pass occupies residues 178–194; the sequence is LAPLLIGLLIAVIGASM. Topologically, residues 195-198 are periplasmic; that stretch reads GPLT. The stretch at 199–202 is an intramembrane region; that stretch reads GFAM. The short motif at 203–205 is the NPA 2 element; that stretch reads NPA. The helical intramembrane region spans 203 to 216; the sequence is NPARDFGPKVFAWL. Over 217 to 231 the chain is Periplasmic; sequence AGWGNVAFTGGRDIP. A helical membrane pass occupies residues 232–254; it reads YFLVPLFGPIVGAIVGAFAYRKL. Topologically, residues 255 to 281 are cytoplasmic; the sequence is IGRHLPCDICVVEEKETTTPSEQKASL.

This sequence belongs to the MIP/aquaporin (TC 1.A.8) family. As to quaternary structure, homotetramer.

The protein resides in the cell inner membrane. The enzyme catalyses glycerol(in) = glycerol(out). Mediates glycerol diffusion across the cytoplasmic membrane via a pore-type mechanism. The sequence is that of Glycerol uptake facilitator protein (glpF) from Escherichia coli O157:H7.